The primary structure comprises 1093 residues: Protein transport protein Sec24A (1093 aa).

Disordered regions lie at residues 1 to 29 (MSQPGIPASGGAPASLQAQNGAALASGSP), 60 to 168 (HPIP…TSLT), 189 to 226 (GPSVPPLVNPPLPTTFQPGAPHGPPPAGGPPPVRALTP), and 294 to 328 (SLPPGYQNTTPPGATGVPPSSLNYPSGPQAFTQTP). Composition is skewed to polar residues over residues 112–126 (ASQNPATTPMPSSSF) and 138–168 (WQYNYPSTASQTNHCPRASSQPTVSGNTSLT). Composition is skewed to pro residues over residues 191–201 (SVPPLVNPPLP) and 209–221 (PHGPPPAGGPPPV). The segment covering 299–328 (YQNTTPPGATGVPPSSLNYPSGPQAFTQTP) has biased composition (polar residues). Zn(2+) contacts are provided by C431, C434, C452, and C455. Residues 431-455 (CRSCRTYINPFVSFLDQRRWKCNLC) are zinc finger-like. The stretch at 966 to 1038 (PQPPILQLSV…TPESARIIAF (73 aa)) is one Gelsolin-like repeat.

The protein belongs to the SEC23/SEC24 family. SEC24 subfamily. As to quaternary structure, COPII is composed of at least five proteins: the Sec23/24 complex, the Sec13/31 complex and Sar1. Interacts with TMED2. Interacts (as part of the Sec23/24 complex) with SEC22B; recruits SEC22B into COPII-coated vesicles for its transport from the endoplasmic reticulum to the Golgi. Interacts with STING1; promoting STING1 translocation to COPII vesicles in a STEEP1-dependent manner. Interacts with TMEM39A. Interacts with SACM1L; this interaction is reduced in the absence of TMEM39A. Interacts with kinase FAM20C; transport of FAM20C from the endoplasmic reticulum to the Golgi is likely to be mediated by COPII vesicles.

It is found in the cytoplasmic vesicle. Its subcellular location is the COPII-coated vesicle membrane. The protein localises to the endoplasmic reticulum membrane. It localises to the cytoplasm. The protein resides in the cytosol. Functionally, component of the coat protein complex II (COPII) which promotes the formation of transport vesicles from the endoplasmic reticulum (ER). The coat has two main functions, the physical deformation of the endoplasmic reticulum membrane into vesicles and the selection of cargo molecules for their transport to the Golgi complex. Plays a central role in cargo selection within the COPII complex and together with SEC24B may have a different specificity compared to SEC24C and SEC24D. May package preferentially cargos with cytoplasmic DxE or LxxLE motifs and may also recognize conformational epitopes. In Homo sapiens (Human), this protein is Protein transport protein Sec24A.